Consider the following 824-residue polypeptide: Ras guanine nucleotide exchange factor I (824 aa).

Disordered stretches follow at residues 1-51 (MSNP…KPTK) and 65-167 (GSNL…LILD). Positions 8-41 (SNSTNGSSNSLNGESVSPNRLGSSPGSPISKASS) are enriched in low complexity. Residues 83-95 (NSSVGLLNNSTGS) show a composition bias toward polar residues. Positions 104–116 (SSPKSSYILSSSI) are enriched in low complexity. The segment covering 117-128 (GSGGSGGGGGSS) has biased composition (gly residues). Residues 136 to 167 (SASNNSSGPRSRSGSLGKNNSSQQNNNNLILD) show a composition bias toward low complexity. The region spanning 223–255 (GRDNILQLILQHLQFEGLMDSRKILEEEAKIQY) is the LisH domain. Disordered regions lie at residues 330 to 354 (YVDE…TTAT) and 398 to 425 (NTQQ…STGT). The segment covering 331–341 (VDEKDNDKPSK) has biased composition (basic and acidic residues). Low complexity predominate over residues 343–354 (SPTTATTTTTAT). Residues 413 to 425 (LKSTQSITGSTGT) are compositionally biased toward polar residues. Residues 426 to 551 (LGPQVKAASL…VISDALNSGL (126 aa)) form the N-terminal Ras-GEF domain. Residues 585 to 816 (DEEEISRQLT…YTRSMSFEPR (232 aa)) enclose the Ras-GEF domain.

Promotes the exchange of Ras-bound GDP by GTP. The sequence is that of Ras guanine nucleotide exchange factor I (gefI) from Dictyostelium discoideum (Social amoeba).